A 244-amino-acid chain; its full sequence is Type III pantothenate kinase (244 aa).

11 to 18 (DAGNTSIK) lines the ATP pocket. Substrate contacts are provided by residues Y90 and 97–100 (GIDR). The Proton acceptor role is filled by D99. Residue D119 participates in K(+) binding. T122 is a binding site for ATP. Residue T175 coordinates substrate.

Belongs to the type III pantothenate kinase family. As to quaternary structure, homodimer. Requires NH4(+) as cofactor. K(+) serves as cofactor.

Its subcellular location is the cytoplasm. The catalysed reaction is (R)-pantothenate + ATP = (R)-4'-phosphopantothenate + ADP + H(+). The protein operates within cofactor biosynthesis; coenzyme A biosynthesis; CoA from (R)-pantothenate: step 1/5. Functionally, catalyzes the phosphorylation of pantothenate (Pan), the first step in CoA biosynthesis. This chain is Type III pantothenate kinase, found in Marinomonas sp. (strain MWYL1).